We begin with the raw amino-acid sequence, 354 residues long: Large ribosomal subunit protein uL10 (354 aa).

2 stretches are compositionally biased toward acidic residues: residues 286–296 (DEEALPEELQD) and 307–345 (AEAD…DGDG). The disordered stretch occupies residues 286-354 (DEEALPEELQ…GGDALGDMFG (69 aa)).

This sequence belongs to the universal ribosomal protein uL10 family. Part of the 50S ribosomal subunit. Forms part of the ribosomal stalk which helps the ribosome interact with GTP-bound translation factors. Forms a heptameric L10(L12)2(L12)2(L12)2 complex, where L10 forms an elongated spine to which the L12 dimers bind in a sequential fashion.

Its function is as follows. Forms part of the ribosomal stalk, playing a central role in the interaction of the ribosome with GTP-bound translation factors. This is Large ribosomal subunit protein uL10 from Natronomonas pharaonis (strain ATCC 35678 / DSM 2160 / CIP 103997 / JCM 8858 / NBRC 14720 / NCIMB 2260 / Gabara) (Halobacterium pharaonis).